The primary structure comprises 154 residues: Large ribosomal subunit protein uL13 (154 aa).

Belongs to the universal ribosomal protein uL13 family. In terms of assembly, part of the 50S ribosomal subunit.

Functionally, this protein is one of the early assembly proteins of the 50S ribosomal subunit, although it is not seen to bind rRNA by itself. It is important during the early stages of 50S assembly. This Brucella abortus (strain S19) protein is Large ribosomal subunit protein uL13.